Here is a 475-residue protein sequence, read N- to C-terminus: E3 ubiquitin-protein ligase TRIM21 (475 aa).

Residues 16 to 55 (CPICLDPFVEPVSIECGHSFCQECISQVGKGGGSVCPVCR) form an RING-type zinc finger. 4 residues coordinate Zn(2+): Cys92, His95, Cys114, and His120. The B box-type zinc-finger motif lies at 92–123 (CAVHGERLHLFCEKDGKALCWVCAQSRKHRDH). Residues 128–238 (LEEAAQEYQE…ISELDRRCHS (111 aa)) are a coiled coil. Ser266 bears the Phosphoserine mark. The B30.2/SPRY domain occupies 268-465 (ELRSVCHVPG…NTAPLTLCPL (198 aa)).

The protein belongs to the TRIM/RBCC family. As to quaternary structure, homotrimer. Interacts (via C-terminus) with IRF8 (via C-terminus). Component of a SCF(SKP2)-like complex containing CUL1, SKP1, TRIM21 and SKP2. Interacts with CALR, CUL1, FBXW11, HSPA5, IKBKB, IRF3, SKP1 and VCP. Interacts with SKP2; the interaction with SKP2 does not depend on an intact F-box domain. Interacts (via N-terminus and C-terminus) with DCP2 (via N-terminus and C-terminus). Interacts with ULK1, BECN1 and with ATG8 family members, including GABARAP, GABARAPL1, GABARAPL2 and MAP1LC3C/LC3C. Interacts with TRIM21 and SQSTM1/sequestosome 1. Interacts with IRF3. Interacts (via the SPRY domain) with NMI (via coiled-coil domain); the interaction promotes 'Lys-63'-linked ubiquitination of NMI. Interacts with IFI35 and NMI; the interaction facilitates NMI-IFI35 complex formation. In terms of assembly, (Microbial infection) Interacts (via B30.2/SPRY domain) with severe fever with thrombocytopenia syndrome virus (SFTSV) NSs; this interaction activates NFE2L2-mediated transcriptional activation of antioxidant genes. Post-translationally, autoubiquitinated; does not lead to its proteasomal degradation. Deubiquitinated by USP4; leading to its stabilization. Isoform 1 and isoform 2 are expressed in fetal and adult heart and fetal lung.

The protein resides in the cytoplasm. It is found in the cytoplasmic vesicle. It localises to the autophagosome. The protein localises to the nucleus. Its subcellular location is the P-body. The protein resides in the stress granule. The catalysed reaction is S-ubiquitinyl-[E2 ubiquitin-conjugating enzyme]-L-cysteine + [acceptor protein]-L-lysine = [E2 ubiquitin-conjugating enzyme]-L-cysteine + N(6)-ubiquitinyl-[acceptor protein]-L-lysine.. It participates in protein modification; protein ubiquitination. Functionally, E3 ubiquitin-protein ligase whose activity is dependent on E2 enzymes, UBE2D1, UBE2D2, UBE2E1 and UBE2E2. Forms a ubiquitin ligase complex in cooperation with the E2 UBE2D2 that is used not only for the ubiquitination of USP4 and IKBKB but also for its self-ubiquitination. Component of cullin-RING-based SCF (SKP1-CUL1-F-box protein) E3 ubiquitin-protein ligase complexes such as SCF(SKP2)-like complexes. A TRIM21-containing SCF(SKP2)-like complex is shown to mediate ubiquitination of CDKN1B ('Thr-187' phosphorylated-form), thereby promoting its degradation by the proteasome. Monoubiquitinates IKBKB that will negatively regulates Tax-induced NF-kappa-B signaling. Negatively regulates IFN-beta production post-pathogen recognition by catalyzing polyubiquitin-mediated degradation of IRF3. Mediates the ubiquitin-mediated proteasomal degradation of IgG1 heavy chain, which is linked to the VCP-mediated ER-associated degradation (ERAD) pathway. Promotes IRF8 ubiquitination, which enhanced the ability of IRF8 to stimulate cytokine genes transcription in macrophages. Plays a role in the regulation of the cell cycle progression. Enhances the decapping activity of DCP2. Exists as a ribonucleoprotein particle present in all mammalian cells studied and composed of a single polypeptide and one of four small RNA molecules. At least two isoforms are present in nucleated and red blood cells, and tissue specific differences in RO/SSA proteins have been identified. The common feature of these proteins is their ability to bind HY RNAs.2. Involved in the regulation of innate immunity and the inflammatory response in response to IFNG/IFN-gamma. Organizes autophagic machinery by serving as a platform for the assembly of ULK1, Beclin 1/BECN1 and ATG8 family members and recognizes specific autophagy targets, thus coordinating target recognition with assembly of the autophagic apparatus and initiation of autophagy. Also regulates autophagy through FIP200/RB1CC1 ubiquitination and subsequent decreased protein stability. Represses the innate antiviral response by facilitating the formation of the NMI-IFI35 complex through 'Lys-63'-linked ubiquitination of NMI. During viral infection, promotes cell pyroptosis by mediating 'Lys-6'-linked ubiquitination of ISG12a/IFI27, facilitating its translocation into the mitochondria and subsequent CASP3 activation. When up-regulated through the IFN/JAK/STAT signaling pathway, promotes 'Lys-27'-linked ubiquitination of MAVS, leading to the recruitment of TBK1 and up-regulation of innate immunity. Mediates 'Lys-63'-linked polyubiquitination of G3BP1 in response to heat shock, leading to stress granule disassembly. This is E3 ubiquitin-protein ligase TRIM21 from Homo sapiens (Human).